A 453-amino-acid chain; its full sequence is Aldehyde dehydrogenase, dimeric NADP-preferring (453 aa).

S2 bears the N-acetylserine mark. Position 178 is an N6-acetyllysine (K178). 188–193 (GSTGVG) provides a ligand contact to NAD(+). An N6-acetyllysine modification is found at K194. Active-site residues include E210 and C244.

This sequence belongs to the aldehyde dehydrogenase family. In terms of assembly, homodimer. High levels in stomach, esophagus and lung; low level in the liver and kidney.

It is found in the cytoplasm. The enzyme catalyses an aldehyde + NAD(+) + H2O = a carboxylate + NADH + 2 H(+). It carries out the reaction octanal + NAD(+) + H2O = octanoate + NADH + 2 H(+). Its function is as follows. ALDHs play a major role in the detoxification of alcohol-derived acetaldehyde. They are involved in the metabolism of corticosteroids, biogenic amines, neurotransmitters, and lipid peroxidation. Oxidizes medium and long chain aldehydes into non-toxic fatty acids. Preferentially oxidizes aromatic aldehyde substrates. Comprises about 50 percent of corneal epithelial soluble proteins. May play a role in preventing corneal damage caused by ultraviolet light. The sequence is that of Aldehyde dehydrogenase, dimeric NADP-preferring (ALDH3A1) from Homo sapiens (Human).